We begin with the raw amino-acid sequence, 704 residues long: Translin-associated factor X-interacting protein 1 (704 aa).

The disordered stretch occupies residues 1–37 (MANLQERKSFSKPRISIQASGGTPEAKGIEKRKLSQK). 2 coiled-coil regions span residues 190-230 (EISV…AEEY) and 304-342 (RRDL…LQLH).

As to quaternary structure, interacts with TSNAX. As to expression, specifically expressed in testes. Predominantly detected in the post-meiotic stages of germ cells.

The protein localises to the cytoplasm. Its subcellular location is the perinuclear region. Its function is as follows. Possible role in spermatogenesis. The sequence is that of Translin-associated factor X-interacting protein 1 from Mus musculus (Mouse).